A 455-amino-acid polypeptide reads, in one-letter code: Fumarate hydratase class II (455 aa).

Substrate-binding positions include 96-98 (SGT), 122-125 (HPND), 132-134 (SSN), and Thr180. The active-site Proton donor/acceptor is His181. Residue Ser311 is part of the active site. Substrate is bound by residues Ser312 and 317–319 (KVN).

Belongs to the class-II fumarase/aspartase family. Fumarase subfamily. In terms of assembly, homotetramer.

It is found in the cytoplasm. It catalyses the reaction (S)-malate = fumarate + H2O. It participates in carbohydrate metabolism; tricarboxylic acid cycle; (S)-malate from fumarate: step 1/1. Functionally, involved in the TCA cycle. Catalyzes the stereospecific interconversion of fumarate to L-malate. The protein is Fumarate hydratase class II of Listeria monocytogenes serovar 1/2a (strain ATCC BAA-679 / EGD-e).